We begin with the raw amino-acid sequence, 122 residues long: Putative iron-sulfur cluster insertion protein ErpA (122 aa).

3 residues coordinate iron-sulfur cluster: C50, C114, and C116.

Belongs to the HesB/IscA family. As to quaternary structure, homodimer. It depends on iron-sulfur cluster as a cofactor.

In terms of biological role, required for insertion of 4Fe-4S clusters. This chain is Putative iron-sulfur cluster insertion protein ErpA, found in Cupriavidus metallidurans (strain ATCC 43123 / DSM 2839 / NBRC 102507 / CH34) (Ralstonia metallidurans).